Reading from the N-terminus, the 314-residue chain is Probable carboxylesterase 2 (314 aa).

The short motif at 79 to 81 (HGG) is the Involved in the stabilization of the negatively charged intermediate by the formation of the oxyanion hole element. Catalysis depends on residues serine 158, aspartate 254, and histidine 286.

It belongs to the 'GDXG' lipolytic enzyme family. As to expression, expressed in roots and flowers.

It catalyses the reaction a carboxylic ester + H2O = an alcohol + a carboxylate + H(+). Functionally, carboxylesterase acting on esters with varying acyl chain length. In Arabidopsis thaliana (Mouse-ear cress), this protein is Probable carboxylesterase 2 (CXE2).